A 5289-amino-acid polypeptide reads, in one-letter code: Mucin-2 (5289 aa).

The signal sequence occupies residues 1 to 20 (MGLPLARLAAVCLALSLAGG). Serine 21 is modified (phosphoserine). Histidine 34 lines the Cu(2+) pocket. One can recognise a VWFD 1 domain in the interval 35–207 (NVCSTWGNFH…KINQPDVVCE (173 aa)). Disulfide bonds link cysteine 37/cysteine 169, cysteine 59/cysteine 206, cysteine 67/cysteine 166, cysteine 218/cysteine 255, cysteine 225/cysteine 250, cysteine 237/cysteine 275, cysteine 257/cysteine 263, cysteine 265/cysteine 291, cysteine 295/cysteine 329, cysteine 308/cysteine 321, cysteine 312/cysteine 351, cysteine 331/cysteine 345, cysteine 353/cysteine 375, cysteine 370/cysteine 387, cysteine 373/cysteine 382, cysteine 391/cysteine 528, cysteine 413/cysteine 563, cysteine 435/cysteine 443, cysteine 574/cysteine 619, cysteine 588/cysteine 614, cysteine 601/cysteine 639, cysteine 621/cysteine 627, cysteine 629/cysteine 654, cysteine 661/cysteine 698, cysteine 674/cysteine 688, cysteine 678/cysteine 718, cysteine 700/cysteine 712, cysteine 720/cysteine 742, and cysteine 740/cysteine 749. Ca(2+) is bound at residue aspartate 49. Cu(+) is bound by residues methionine 146 and methionine 154. Glutamate 156 serves as a coordination point for Cu(2+). N-linked (GlcNAc...) asparagine glycosylation is present at asparagine 163. Residues aspartate 171, asparagine 173, leucine 175, and glutamate 180 each contribute to the Ca(2+) site. Residue histidine 277 participates in Cu(2+) binding. Residues 295–351 (CPGNLVYLESGSPCMDTCSHLEVSSLCEEHRMDGCFCPEGTVYDDIGDSGCVPVSQC) enclose the TIL domain. Residue histidine 324 coordinates Cu(2+). Methionine 326 is a binding site for Cu(+). One can recognise a VWFD 2 domain in the interval 389–564 (GTCALEGGSH…NTWKAQSSCH (176 aa)). Aspartate 403 provides a ligand contact to Ca(2+). Residue asparagine 423 is glycosylated (N-linked (GlcNAc...) asparagine). Residues asparagine 530, asparagine 532, leucine 534, aspartate 537, and aspartate 538 each coordinate Ca(2+). The N-linked (GlcNAc...) asparagine glycan is linked to asparagine 670. A glycan (N-linked (GlcNAc...) asparagine) is linked at asparagine 770. Disulfide bonds link cysteine 784–cysteine 820, cysteine 802–cysteine 814, cysteine 822–cysteine 844, cysteine 839–cysteine 856, cysteine 842–cysteine 851, cysteine 860–cysteine 992, cysteine 882–cysteine 1027, cysteine 891–cysteine 989, cysteine 909–cysteine 916, cysteine 1037–cysteine 1080, cysteine 1051–cysteine 1075, cysteine 1062–cysteine 1102, cysteine 1082–cysteine 1090, cysteine 1092–cysteine 1117, cysteine 1108–cysteine 1137, cysteine 1121–cysteine 1163, cysteine 1145–cysteine 1187, cysteine 1167–cysteine 1181, cysteine 1189–cysteine 1213, cysteine 1208–cysteine 1238, and cysteine 1211–cysteine 1221. Positions 858-1028 (GTCSIYGSGH…NSWKEAPTCP (171 aa)) constitute a VWFD 3 domain. Ca(2+) is bound at residue aspartate 872. A glycan (N-linked (GlcNAc...) asparagine) is linked at asparagine 894. 5 residues coordinate Ca(2+): asparagine 994, aspartate 996, arginine 998, asparagine 1001, and aspartate 1002. N-linked (GlcNAc...) asparagine glycans are attached at residues asparagine 1139 and asparagine 1154. 3 N-linked (GlcNAc...) asparagine glycosylation sites follow: asparagine 1215, asparagine 1230, and asparagine 1246. O-linked (GalNAc) threonine glycans are attached at residues threonine 1266, threonine 1267, threonine 1269, threonine 1270, threonine 1272, threonine 1275, threonine 1276, threonine 1281, threonine 1282, and threonine 1287. O-linked (GalNAc) serine glycans are attached at residues serine 1291 and serine 1292. Residue threonine 1293 is glycosylated (O-linked (GalNAc) threonine). The O-linked (GalNAc) serine glycan is linked to serine 1296. The O-linked (GalNAc) threonine glycan is linked to threonine 1297. Ca(2+) is bound by residues asparagine 1310, aspartate 1312, histidine 1313, serine 1316, aspartate 1319, glycine 1321, aspartate 1322, glutamate 1324, aspartate 1381, and tyrosine 1382. 5 stretches are compositionally biased toward pro residues: residues 1399–1411 (PSPP…PPPT), 1419–1510 (TTTP…PITP), 1520–1549 (TTTP…PITP), 1559–1628 (TTTP…PITP), and 1638–1679 (TTTP…PPTT). The disordered stretch occupies residues 1399-1773 (PSPPTTTPSP…SITPPTFSPF (375 aa)). 6 repeat units span residues 1401-1416 (PPTT…TTTL), 1417-1432 (PPTT…TTTP), 1433-1448 (PPTT…TTTP), 1449-1464 (PPTT…TTTP), 1465-1471 (PPTTTPS), and 1472-1478 (PPTTTPS). The tract at residues 1401 to 1747 (PPTTTPSPPP…SPPTTTMTTL (347 aa)) is approximate repeats. The 7A repeat unit spans residues 1479–1494 (PPTTTPSPPTTTTTTP). The 7B repeat unit spans residues 1495–1517 (PPTTTPSPPTTTPITPPASTTTL). One copy of the 8A repeat lies at 1518–1533 (PPTTTPSPPTTTTTTP). The stretch at 1534–1556 (PPTTTPSPPTTTPITPPTSTTTL) is one 8B repeat. A 9A repeat occupies 1557-1572 (PPTTTPSPPPTTTTTP). Residues 1573-1596 (PPTTTPSPPTTTTPSPPTITTTTP) form a 9B repeat. A 10A repeat occupies 1597–1612 (PPTTTPSPPTTTTTTP). The stretch at 1613–1635 (PPTTTPSPPTTTPITPPTSTTTL) is one 10B repeat. An 11A repeat occupies 1636-1651 (PPTTTPSPPPTTTTTP). Residues 1652–1675 (PPTTTPSPPTTTTPSPPITTTTTP) form an 11B repeat. A run of 5 repeats spans residues 1676–1683 (PPTTTPSS), 1684–1699 (PITT…MTTP), 1700–1715 (SPTT…TTTP), 1716–1731 (SSTT…MTTP), and 1732–1747 (SPTT…MTTL). Composition is skewed to low complexity over residues 1680–1720 (TPSS…STTT) and 1741–1759 (TTTM…LTTT). Positions 1760–1770 (PLPPSITPPTF) are enriched in pro residues. Asparagine 1787 and asparagine 1820 each carry an N-linked (GlcNAc...) asparagine glycan. Low complexity-rich tracts occupy residues 1885–2158 (MTTT…TMVT), 2165–4238 (GTQT…QTPT), 4269–4315 (TTVT…STAP), and 4329–4430 (STPQ…PSII). Disordered stretches follow at residues 1885 to 4238 (MTTT…QTPT) and 4269 to 4430 (TTVT…PSII). 4 N-linked (GlcNAc...) asparagine glycosylation sites follow: asparagine 4449, asparagine 4461, asparagine 4472, and asparagine 4483. The interval 4492 to 4524 (PTPTPSKSTPTPSKPSSTPSKPTPGTKPPECPD) is disordered. Low complexity predominate over residues 4496-4511 (PSKSTPTPSKPSSTPS). Residues 4512–4522 (KPTPGTKPPEC) show a composition bias toward pro residues. Asparagine 4532, asparagine 4548, and asparagine 4612 each carry an N-linked (GlcNAc...) asparagine glycan. The region spanning 4589-4772 (CYCTGWGDPH…VNDPSKPHCP (184 aa)) is the VWFD 4 domain. Disulfide bonds link cysteine 4591-cysteine 4732, cysteine 4613-cysteine 4771, and cysteine 4637-cysteine 4645. Residues asparagine 4726 and asparagine 4737 are each glycosylated (N-linked (GlcNAc...) asparagine). Residues 4770 to 4795 (HCPHSSSTTKRPAVTVPGGGKTTPHK) are disordered. N-linked (GlcNAc...) asparagine glycans are attached at residues asparagine 4862, asparagine 4897, asparagine 4991, asparagine 4998, asparagine 5065, asparagine 5080, asparagine 5129, asparagine 5148, and asparagine 5179. One can recognise a VWFC 1 domain in the interval 4927 to 4996 (CVGPDNVPRE…DTCCNITVCK (70 aa)). Residues 5034 to 5101 (GVCVHGNAEY…APGECCKKCE (68 aa)) enclose the VWFC 2 domain. Intrachain disulfides connect cysteine 5185-cysteine 5232, cysteine 5199-cysteine 5246, cysteine 5208-cysteine 5262, and cysteine 5212-cysteine 5264. The region spanning 5185–5270 (CSTVPVTTEV…SCQCQDTVCG (86 aa)) is the CTCK domain.

In terms of assembly, homomultimer; disulfide-linked. The N- and C-terminus mediate their assembly into higher order structures to form filaments. The CTCK domains of two polypeptides associate in the endoplasmic reticulum to generate intermolecularly disulfide-bonded dimers. These dimers progress to the Golgi apparatus, which is a more acidic environment than the endoplasmic reticulum. Under acidic conditions, the N-termini form non-covalent intermolecular interactions that juxtapose assemblies of the third VWD domain (VWD3) from different CTCK-linked dimers. The VWD3 assemblies then become disulfide bonded to one another to produce long, disulfide-linked polymers that remain highly compact until secretion. Interacts with FCGBP. Interacts with AGR2; disulfide-linked. (Microbial infection) Interacts in vitro with L.monocytogenes internalin proteins InlB, InlC and InlJ; for InlC binding is slightly better at pH 5.5, (the pH of the intestine) than at pH 7.4. O-glycosylated. O-glycosylation is required for mucin assembly. Goblet cells synthesize two forms of mucin that differ in branched chain O-glycosylation and the site of production in the colon. In terms of processing, may undergo proteolytic cleavage in the outer mucus layer of the colon, contributing to the expanded volume and loose nature of this layer which allows for bacterial colonization in contrast to the inner mucus layer which is dense and devoid of bacteria. Post-translationally, at low pH of 6 and under, undergoes autocatalytic cleavage in vitro in the N-terminal region of the fourth VWD domain. It is likely that this also occurs in vivo and is triggered by the low pH of the late secretory pathway. Colon, small intestine, colonic tumors, bronchus, cervix and gall bladder.

Its subcellular location is the secreted. In terms of biological role, coats the epithelia of the intestines and other mucus membrane-containing organs to provide a protective, lubricating barrier against particles and infectious agents at mucosal surfaces. Major constituent of the colon mucus, which is mainly formed by large polymeric networks of MUC2 secreted by goblet cells that cover the exposed surfaces of intestine. MUC2 networks form hydrogels that guard the underlying epithelium from pathogens and other hazardous matter entering from the outside world, while permitting nutrient absorption and gas exchange. Acts as a divalent copper chaperone that protects intestinal cells from copper toxicity and facilitates nutritional copper unptake into cells. Binds both Cu(2+) and its reduced form, Cu(1+), at two juxtaposed binding sites: Cu(2+), once reduced to Cu(1+) by vitamin C (ascorbate) or other dietary antioxidants, transits to the other binding site. MUC2-bound Cu(1+) is protected from oxidation in aerobic environments, and can be released for nutritional delivery to cells. Mucin gels store antimicrobial molecules that participate in innate immunity. Mucin glycoproteins also house and feed the microbiome, lubricate tissue surfaces, and may facilitate the removal of contaminants and waste products from the body. Goblet cells synthesize two forms of MUC2 mucin that differ in branched chain O-glycosylation and the site of production in the colon: a (1) 'thick' mucus that wraps the microbiota to form fecal pellets is produced in the proximal, ascending colon. 'Thick' mucus transits along the descending colon and is lubricated by a (2) 'thin' MUC2 mucus produced in the distal colon which adheres to the 'thick' mucus. The chain is Mucin-2 from Homo sapiens (Human).